The primary structure comprises 350 residues: Biotin synthase (350 aa).

Residues 54-278 (REIQLSTLLS…TMPQSYVRLS (225 aa)) form the Radical SAM core domain. [4Fe-4S] cluster is bound by residues cysteine 69, cysteine 73, and cysteine 76. Positions 113, 144, 204, and 276 each coordinate [2Fe-2S] cluster.

The protein belongs to the radical SAM superfamily. Biotin synthase family. As to quaternary structure, homodimer. [4Fe-4S] cluster serves as cofactor. The cofactor is [2Fe-2S] cluster.

It carries out the reaction (4R,5S)-dethiobiotin + (sulfur carrier)-SH + 2 reduced [2Fe-2S]-[ferredoxin] + 2 S-adenosyl-L-methionine = (sulfur carrier)-H + biotin + 2 5'-deoxyadenosine + 2 L-methionine + 2 oxidized [2Fe-2S]-[ferredoxin]. The protein operates within cofactor biosynthesis; biotin biosynthesis; biotin from 7,8-diaminononanoate: step 2/2. In terms of biological role, catalyzes the conversion of dethiobiotin (DTB) to biotin by the insertion of a sulfur atom into dethiobiotin via a radical-based mechanism. In Neisseria meningitidis serogroup B (strain ATCC BAA-335 / MC58), this protein is Biotin synthase.